The following is a 138-amino-acid chain: uncharacterized protein (138 aa).

This is an uncharacterized protein from Homo sapiens (Human).